A 464-amino-acid polypeptide reads, in one-letter code: Kynureninase (464 aa).

The residue at position 1 (M1) is an N-acetylmethionine. Pyridoxal 5'-phosphate-binding positions include L137, T138, 165 to 168, S221, D250, H253, and Y275; that span reads FPSD. K276 bears the N6-(pyridoxal phosphate)lysine mark. 2 residues coordinate pyridoxal 5'-phosphate: W305 and N333.

This sequence belongs to the kynureninase family. Homodimer. It depends on pyridoxal 5'-phosphate as a cofactor. As to expression, high levels in liver and kidney. Also detected in heart, retina, ovary. Lung, testis and brain.

The protein resides in the cytoplasm. It localises to the cytosol. The catalysed reaction is L-kynurenine + H2O = anthranilate + L-alanine + H(+). It carries out the reaction 3-hydroxy-L-kynurenine + H2O = 3-hydroxyanthranilate + L-alanine + H(+). The protein operates within amino-acid degradation; L-kynurenine degradation; L-alanine and anthranilate from L-kynurenine: step 1/1. It participates in cofactor biosynthesis; NAD(+) biosynthesis; quinolinate from L-kynurenine: step 2/3. Its activity is regulated as follows. Inhibited by o-methylbenzoylalanine (OMBA). In terms of biological role, catalyzes the cleavage of L-kynurenine (L-Kyn) and L-3-hydroxykynurenine (L-3OHKyn) into anthranilic acid (AA) and 3-hydroxyanthranilic acid (3-OHAA), respectively. Has a preference for the L-3-hydroxy form. Also has cysteine-conjugate-beta-lyase activity. The chain is Kynureninase (Kynu) from Rattus norvegicus (Rat).